We begin with the raw amino-acid sequence, 499 residues long: Proline--tRNA ligase (499 aa).

Over residues 1 to 17 (MTKDGGKKDNQGQDKKA) the composition is skewed to basic and acidic residues. The segment at 1–21 (MTKDGGKKDNQGQDKKAQQYG) is disordered.

It belongs to the class-II aminoacyl-tRNA synthetase family. ProS type 3 subfamily. In terms of assembly, homodimer.

It localises to the cytoplasm. It catalyses the reaction tRNA(Pro) + L-proline + ATP = L-prolyl-tRNA(Pro) + AMP + diphosphate. Functionally, catalyzes the attachment of proline to tRNA(Pro) in a two-step reaction: proline is first activated by ATP to form Pro-AMP and then transferred to the acceptor end of tRNA(Pro). Can inadvertently accommodate and process cysteine. In Deinococcus radiodurans (strain ATCC 13939 / DSM 20539 / JCM 16871 / CCUG 27074 / LMG 4051 / NBRC 15346 / NCIMB 9279 / VKM B-1422 / R1), this protein is Proline--tRNA ligase (proS).